The primary structure comprises 419 residues: Serine hydroxymethyltransferase (419 aa).

Residues Leu121 and Gly125–Leu127 contribute to the (6S)-5,6,7,8-tetrahydrofolate site. Residue Lys230 is modified to N6-(pyridoxal phosphate)lysine. Ser355 to Phe357 contributes to the (6S)-5,6,7,8-tetrahydrofolate binding site.

This sequence belongs to the SHMT family. In terms of assembly, homodimer. It depends on pyridoxal 5'-phosphate as a cofactor.

The protein localises to the cytoplasm. It carries out the reaction (6R)-5,10-methylene-5,6,7,8-tetrahydrofolate + glycine + H2O = (6S)-5,6,7,8-tetrahydrofolate + L-serine. The protein operates within one-carbon metabolism; tetrahydrofolate interconversion. It functions in the pathway amino-acid biosynthesis; glycine biosynthesis; glycine from L-serine: step 1/1. In terms of biological role, catalyzes the reversible interconversion of serine and glycine with tetrahydrofolate (THF) serving as the one-carbon carrier. This reaction serves as the major source of one-carbon groups required for the biosynthesis of purines, thymidylate, methionine, and other important biomolecules. Also exhibits THF-independent aldolase activity toward beta-hydroxyamino acids, producing glycine and aldehydes, via a retro-aldol mechanism. The sequence is that of Serine hydroxymethyltransferase from Streptococcus uberis (strain ATCC BAA-854 / 0140J).